The chain runs to 778 residues: Lon protease (778 aa).

Residues 6-207 enclose the Lon N-terminal domain; that stretch reads LPLMALRDMV…TVISMLNSNI (202 aa). 356–363 lines the ATP pocket; the sequence is GPPGVGKT. Residues 592–773 enclose the Lon proteolytic domain; sequence EDQIGSTTGL…DQVLKHALVG (182 aa). Active-site residues include Ser679 and Lys722.

It belongs to the peptidase S16 family. As to quaternary structure, homohexamer. Organized in a ring with a central cavity.

It is found in the cytoplasm. The catalysed reaction is Hydrolysis of proteins in presence of ATP.. Functionally, ATP-dependent serine protease that mediates the selective degradation of mutant and abnormal proteins as well as certain short-lived regulatory proteins. Required for cellular homeostasis and for survival from DNA damage and developmental changes induced by stress. Degrades polypeptides processively to yield small peptide fragments that are 5 to 10 amino acids long. Binds to DNA in a double-stranded, site-specific manner. This Rickettsia conorii (strain ATCC VR-613 / Malish 7) protein is Lon protease.